A 93-amino-acid chain; its full sequence is uncharacterized protein (93 aa).

The disordered stretch occupies residues 73–93 (KWTVSGPVKQDTGKTDPAEKN). A compositionally biased stretch (basic and acidic residues) spans 83 to 93 (DTGKTDPAEKN).

This is an uncharacterized protein from Rhodobacter capsulatus (Rhodopseudomonas capsulata).